Consider the following 97-residue polypeptide: Large ribosomal subunit protein uL23 (97 aa).

This sequence belongs to the universal ribosomal protein uL23 family. Part of the 50S ribosomal subunit. Contacts protein L29, and trigger factor when it is bound to the ribosome.

Its function is as follows. One of the early assembly proteins it binds 23S rRNA. One of the proteins that surrounds the polypeptide exit tunnel on the outside of the ribosome. Forms the main docking site for trigger factor binding to the ribosome. The chain is Large ribosomal subunit protein uL23 from Agrobacterium fabrum (strain C58 / ATCC 33970) (Agrobacterium tumefaciens (strain C58)).